The chain runs to 215 residues: Redox-sensing transcriptional repressor Rex (215 aa).

Residues 18–57 constitute a DNA-binding region (H-T-H motif); it reads LYHRYLKYLDESGKERVSSAELSEAVKVDSATIRRDFSYF. Residue 92–97 participates in NAD(+) binding; that stretch reads GVGNLG.

It belongs to the transcriptional regulatory Rex family. As to quaternary structure, homodimer.

It localises to the cytoplasm. In terms of biological role, modulates transcription in response to changes in cellular NADH/NAD(+) redox state. This chain is Redox-sensing transcriptional repressor Rex, found in Listeria innocua serovar 6a (strain ATCC BAA-680 / CLIP 11262).